We begin with the raw amino-acid sequence, 216 residues long: Probable transaldolase (216 aa).

Lysine 83 serves as the catalytic Schiff-base intermediate with substrate.

The protein belongs to the transaldolase family. Type 3B subfamily.

The protein resides in the cytoplasm. The catalysed reaction is D-sedoheptulose 7-phosphate + D-glyceraldehyde 3-phosphate = D-erythrose 4-phosphate + beta-D-fructose 6-phosphate. It participates in carbohydrate degradation; pentose phosphate pathway; D-glyceraldehyde 3-phosphate and beta-D-fructose 6-phosphate from D-ribose 5-phosphate and D-xylulose 5-phosphate (non-oxidative stage): step 2/3. Transaldolase is important for the balance of metabolites in the pentose-phosphate pathway. The protein is Probable transaldolase of Thermoanaerobacter sp. (strain X514).